A 79-amino-acid polypeptide reads, in one-letter code: Major outer membrane lipoprotein Lpp 2 (79 aa).

A signal peptide spans 1–21 (MNRTNKLILGAVVLGSALLAG). Residue C22 is the site of N-palmitoyl cysteine attachment. The S-diacylglycerol cysteine moiety is linked to residue C22. 2 repeats span residues 25–35 (NAKIDQLSSDV) and 39–49 (SAKVDQLSNDV). The stretch at 28–76 (IDQLSSDVQTLSAKVDQLSNDVNAMRSDIQAAKDDAARANQRLDNKVSR) forms a coiled coil. Residues 60–79 (KDDAARANQRLDNKVSRVRK) are disordered. K79 is subject to N6-murein peptidoglycan lysine.

Belongs to the Lpp family. As to quaternary structure, homotrimer.

Its subcellular location is the cell outer membrane. The protein localises to the secreted. The protein resides in the cell wall. A highly abundant outer membrane lipoprotein that controls the distance between the inner and outer membranes. The only protein known to be covalently linked to the peptidoglycan network (PGN). Also non-covalently binds the PGN. The link between the cell outer membrane and PGN contributes to maintenance of the structural and functional integrity of the cell envelope, and maintains the correct distance between the PGN and the outer membrane. This is Major outer membrane lipoprotein Lpp 2 from Salmonella paratyphi A (strain ATCC 9150 / SARB42).